A 601-amino-acid polypeptide reads, in one-letter code: Serine/threonine-protein phosphatase 2A 65 kDa regulatory subunit A beta isoform (601 aa).

N-acetylalanine is present on alanine 2. HEAT repeat units lie at residues 20 to 58 (DSLYPIAVLIDELRNEDVQLRLNSIKKLSTIALALGVER), 59 to 96 (TRTELLPFLTDTIYDEDEVLLALAEQLGNFTGLVGGPD), 97 to 135 (FAHCLLPPLESLATVEETVVRDKAVESLRQISQEHTPVA), 136 to 173 (LEAHFVPLVKRLASGDWFTSRTSACGLFSVCYPRASNA), 174 to 212 (VKAEIRQHFRSLCSDDTPMVRRAAASKLGEFAKVLELDS), 213 to 251 (VKTEIVPLFTNLASDEQDSVRLLAVEACVSIAQLLSQDD), 252 to 290 (LEALVMPTLRQAAEDKSWRVRYMVADKFSELQKAVGPKI), 291 to 333 (ALSD…RETV), 334 to 372 (IMNQILPYIKELVSDTNQHVKSALASVIMGLSTVLGKEN), 373 to 411 (TIEHLLPLFLAQLKDECPEVRLNIISNLDCVNEVIGIRQ), 412 to 450 (LSQSLLPAIVELAEDAKWRVRLAIIEYMPLLAGQLGVEF), 451 to 489 (FDEKLNSLCMAWLVDHVYAIREAATNNLMKLVQKFGTEW), 490 to 528 (AQNTIVPKVLVMANDPNYLHRMTTLFCINALSEACGKEI), 529 to 567 (TTKQMLPIVLKMAGDQVANVRFNVAKSLQKIGPILDTNA), and 568 to 601 (LQGEVKPVLQKLGQDEDMDVKYFAQEAISVLALA).

It belongs to the phosphatase 2A regulatory subunit A family. As to quaternary structure, PP2A consists of a common heterodimeric core enzyme, composed of a 36 kDa catalytic subunit (subunit C) and a 65 kDa constant regulatory subunit (PR65 or subunit A), that associates with a variety of regulatory subunits. Proteins that associate with the core dimer include three families of regulatory subunits B (the R2/B/PR55/B55, R3/B''/PR72/PR130/PR59 and R5/B'/B56 families), the 48 kDa variable regulatory subunit, viral proteins, and cell signaling molecules. Interacts with IPO9. Interacts with SGO1. Interacts with RAF1.

Its function is as follows. The PR65 subunit of protein phosphatase 2A serves as a scaffolding molecule to coordinate the assembly of the catalytic subunit and a variable regulatory B subunit. In Rattus norvegicus (Rat), this protein is Serine/threonine-protein phosphatase 2A 65 kDa regulatory subunit A beta isoform (Ppp2r1b).